The following is a 357-amino-acid chain: Aspartate carbamoyltransferase catalytic subunit (357 aa).

Polar residues predominate over residues 1–15 (MSNSIDSQSLPTVSP). A disordered region spans residues 1 to 21 (MSNSIDSQSLPTVSPTDYARF). 2 residues coordinate carbamoyl phosphate: Arg97 and Thr98. Lys125 serves as a coordination point for L-aspartate. Carbamoyl phosphate is bound by residues Arg147, His177, and Gln180. Residues Arg211 and Arg266 each contribute to the L-aspartate site. Residues Gly307 and Pro308 each contribute to the carbamoyl phosphate site.

Belongs to the aspartate/ornithine carbamoyltransferase superfamily. ATCase family. As to quaternary structure, heterododecamer (2C3:3R2) of six catalytic PyrB chains organized as two trimers (C3), and six regulatory PyrI chains organized as three dimers (R2).

It carries out the reaction carbamoyl phosphate + L-aspartate = N-carbamoyl-L-aspartate + phosphate + H(+). The protein operates within pyrimidine metabolism; UMP biosynthesis via de novo pathway; (S)-dihydroorotate from bicarbonate: step 2/3. Its function is as follows. Catalyzes the condensation of carbamoyl phosphate and aspartate to form carbamoyl aspartate and inorganic phosphate, the committed step in the de novo pyrimidine nucleotide biosynthesis pathway. This chain is Aspartate carbamoyltransferase catalytic subunit, found in Psychrobacter cryohalolentis (strain ATCC BAA-1226 / DSM 17306 / VKM B-2378 / K5).